We begin with the raw amino-acid sequence, 1893 residues long: CDK5 regulatory subunit-associated protein 2 (1893 aa).

The interval 51 to 94 is CM1 motif; interacts with the gTuRC; it reads TVSPTRARNMKDFENQITELKKENFNLKLRIYFLEERMQQEFHG. The interval 58-196 is interaction with NCKAP5L; it reads RNMKDFENQI…TEKALRLRLE (139 aa). Phosphoserine is present on S547. The interaction with MAPRE1 stretch occupies residues 926 to 1208; that stretch reads PGITNREAKK…LENLKQQLEE (283 aa). Position 1001 is a phosphothreonine (T1001). 2 disordered regions span residues 1015 to 1071 and 1084 to 1105; these read AAYQ…NPED and SKSQ…SINT. Residues 1034 to 1048 show a composition bias toward basic and acidic residues; sequence WRDKEMDSDQQRSYE. S1238 bears the Phosphoserine mark. Positions 1347-1381 are disordered; it reads LPESPEPSASHALSDYETSEKSFFSRDQKQDNETE. Over residues 1364-1381 the composition is skewed to basic and acidic residues; the sequence is TSEKSFFSRDQKQDNETE. S1490 bears the Phosphoserine mark. Composition is skewed to basic and acidic residues over residues 1500 to 1519 and 1651 to 1661; these read SVKE…ERHN and PDKHDGDKYPM. 3 disordered regions span residues 1500–1521, 1646–1706, and 1754–1774; these read SVKE…HNQQ, EVPL…ATST, and QTQE…PHPA. S1663 and S1666 each carry phosphoserine. Composition is skewed to polar residues over residues 1663 to 1706 and 1754 to 1766; these read SDNS…ATST and QTQE…SQEL. The tract at residues 1726–1768 is interaction with CDK5R1; that stretch reads HVLGLIEDYEALLKQISQGQRLLAEMDIQTQEAPSSTSQELGT. Positions 1726 to 1893 are interaction with PCNT and AKAP9; sequence HVLGLIEDYE…GTCSPSRPGS (168 aa). A required for centrosomal attachment, Golgi localization and CALM1 interaction region spans residues 1861 to 1870; that stretch reads VVTHKILRKA. S1893 bears the Phosphoserine mark.

As to quaternary structure, homodimer. Interacts with CDK5R1 (p35 form). CDK5RAP1, CDK5RAP2 and CDK5RAP3 show competitive binding to CDK5R1. May form a complex with CDK5R1 and CDK5. Interacts with pericentrin/PCNT; the interaction is leading to centrosomal and Golgi localization of CDK5RAP2 and PCNT. Interacts with AKAP9; the interaction targets CDK5RAP2 and AKAP9 to Golgi apparatus. Interacts with MAPRE1; the interaction is direct and targets CDK5RAP2 and EB1/MAPRE1 to microtubule plus ends. Interacts with TUBG1; the interaction is leading to the centrosomal localization of CDK5RAP2 and TUBG1. Interacts with TUBGCP3. Interacts with CALM1. Interacts with CDC20. Interacts with CEP68; degradation of CEP68 in early mitosis leads to removal of CDK5RAP2 from the centrosome which promotes centriole disengagement and subsequent centriole separation. Interacts with NCKAP5L. Forms a pericentrosomal complex with AKAP9, MAPRE1 and PDE4DIP isoform 13/MMG8/SMYLE; within this complex, MAPRE1 binding to CDK5RAP2 may be mediated by PDE4DIP. Interacts with LGALS3BP; this interaction may connect the pericentrosomal complex to the gamma-tubulin ring complex (gTuRC) to promote microtubule assembly and acetylation. Interacts with CCDC66. Associates (via CM1 motif) with TUBGCP2 of the gTuRC; the interaction plays a role in gTuRC activation. In terms of processing, phosphorylated in vitro by CDK5. Widely expressed. Expressed in heart, brain, placenta, lung, liver, skeletal muscle, kidney and pancreas.

It localises to the cytoplasm. The protein resides in the cytoskeleton. The protein localises to the microtubule organizing center. Its subcellular location is the centrosome. It is found in the golgi apparatus. Functionally, potential regulator of CDK5 activity via its interaction with CDK5R1. Negative regulator of centriole disengagement (licensing) which maintains centriole engagement and cohesion. Involved in regulation of mitotic spindle orientation. Plays a role in the spindle checkpoint activation by acting as a transcriptional regulator of both BUBR1 and MAD2 promoter. Together with EB1/MAPRE1, may promote microtubule polymerization, bundle formation, growth and dynamics at the plus ends. Regulates centrosomal maturation by recruitment of the gamma-tubulin ring complex (gTuRC) onto centrosomes. In complex with PDE4DIP isoform 13/MMG8/SMYLE, MAPRE1 and AKAP9, contributes to microtubules nucleation and extension from the centrosome to the cell periphery. Required for the recruitment of AKAP9 to centrosomes. Plays a role in neurogenesis. This chain is CDK5 regulatory subunit-associated protein 2 (CDK5RAP2), found in Homo sapiens (Human).